Consider the following 160-residue polypeptide: 2-C-methyl-D-erythritol 2,4-cyclodiphosphate synthase (160 aa).

Residues aspartate 10 and histidine 12 each coordinate a divalent metal cation. 4-CDP-2-C-methyl-D-erythritol 2-phosphate is bound by residues 10 to 12 and 36 to 37; these read DVH and HS. Histidine 44 lines the a divalent metal cation pocket. Residues 58 to 60, 134 to 137, phenylalanine 141, and arginine 144 each bind 4-CDP-2-C-methyl-D-erythritol 2-phosphate; these read DIG and TTTE.

The protein belongs to the IspF family. Homotrimer. Requires a divalent metal cation as cofactor.

It carries out the reaction 4-CDP-2-C-methyl-D-erythritol 2-phosphate = 2-C-methyl-D-erythritol 2,4-cyclic diphosphate + CMP. The protein operates within isoprenoid biosynthesis; isopentenyl diphosphate biosynthesis via DXP pathway; isopentenyl diphosphate from 1-deoxy-D-xylulose 5-phosphate: step 4/6. In terms of biological role, involved in the biosynthesis of isopentenyl diphosphate (IPP) and dimethylallyl diphosphate (DMAPP), two major building blocks of isoprenoid compounds. Catalyzes the conversion of 4-diphosphocytidyl-2-C-methyl-D-erythritol 2-phosphate (CDP-ME2P) to 2-C-methyl-D-erythritol 2,4-cyclodiphosphate (ME-CPP) with a corresponding release of cytidine 5-monophosphate (CMP). In Phocaeicola vulgatus (strain ATCC 8482 / DSM 1447 / JCM 5826 / CCUG 4940 / NBRC 14291 / NCTC 11154) (Bacteroides vulgatus), this protein is 2-C-methyl-D-erythritol 2,4-cyclodiphosphate synthase.